Reading from the N-terminus, the 266-residue chain is Apolipoprotein A-I (266 aa).

The signal sequence occupies residues 1-18 (MKAVVLTLAVLFLTGSQA). A run of 2 repeats spans residues 67-88 (LKLL…EQIG) and 89-110 (PVTQ…QEMS). A 10 X approximate tandem repeats region spans residues 67–266 (LKLLDNWDSL…DEAAKKLNAQ (200 aa)). The residue at position 109 (M109) is a Methionine sulfoxide. The stretch at 111–121 (KDLEEVKQKVQ) is one 3; half-length repeat. Repeat copies occupy residues 122 to 142 (PYLD…RQKV), 144 to 165 (PLGA…EKLS), 166 to 187 (PLGE…AQLA), 188 to 210 (PYSD…DGGA), and 211 to 231 (SLAE…EKAK). One copy of the 9; half-length repeat lies at 232 to 242 (PALEDLRQGLL). Repeat 10 spans residues 243 to 266 (PVLESFKVSLLAAVDEAAKKLNAQ).

The protein belongs to the apolipoprotein A1/A4/E family. As to quaternary structure, homodimer. Interacts with APOA1BP and CLU. Component of a sperm activating protein complex (SPAP), consisting of APOA1, an immunoglobulin heavy chain, an immunoglobulin light chain and albumin. Interacts with NDRG1. Interacts with SCGB3A2. Interacts with NAXE and YJEFN3. In terms of processing, glycosylated. Post-translationally, palmitoylated. Phosphorylation sites are present in the extracellular medium. Major protein of plasma HDL, also found in chylomicrons.

The protein localises to the secreted. Functionally, participates in the reverse transport of cholesterol from tissues to the liver for excretion by promoting cholesterol efflux from tissues and by acting as a cofactor for the lecithin cholesterol acyltransferase (LCAT). As part of the SPAP complex, activates spermatozoa motility. The polypeptide is Apolipoprotein A-I (APOA1) (Ailuropoda melanoleuca (Giant panda)).